A 499-amino-acid polypeptide reads, in one-letter code: Patatin-like protein 6 (499 aa).

Residues 111–314 enclose the PNPLA domain; it reads LSIDSGGMRG…AMSNPTAAAI (204 aa). The GGXR signature appears at 116 to 119; that stretch reads GGMR. The Nucleophile role is filled by Ser155. Asp301 serves as the catalytic Proton acceptor. The DGA/G motif lies at 301 to 303; the sequence is DGG.

It belongs to the patatin family. As to expression, highly expressed in siliques and at lower levels in roots and flowers.

Possesses non-specific lipolytic acyl hydrolase (LAH) activity. Hydrolyzes phospholipids as well as galactolipids. May play a role in disease resistance. The sequence is that of Patatin-like protein 6 (PLP6) from Arabidopsis thaliana (Mouse-ear cress).